Reading from the N-terminus, the 309-residue chain is Prepilin leader peptidase/N-methyltransferase (309 aa).

The chain crosses the membrane as a helical span at residues 35-55; the sequence is MQLAFAIVLGLVVGSFLNVVV. Zn(2+) contacts are provided by Cys-96, Cys-99, Cys-121, and Cys-124. The next 6 helical transmembrane spans lie at 147 to 167, 183 to 203, 207 to 227, 230 to 250, 253 to 273, and 288 to 308; these read LALFGPSGAALAAFGLCAALL, LTLPLLWAGLCVNLWGTFASL, VIGAIAGYLFLWCILWLFKLL, IEGIGYGDLKLLAALGAWLGW, LPQVVLIAAVAGAAVGLVATW, and FLAAGGAATLFFGTPFYLLLG.

Belongs to the peptidase A24 family. Requires Zn(2+) as cofactor.

It localises to the cell inner membrane. The catalysed reaction is Typically cleaves a -Gly-|-Phe- bond to release an N-terminal, basic peptide of 5-8 residues from type IV prepilin, and then N-methylates the new N-terminal amino group, the methyl donor being S-adenosyl-L-methionine.. Functionally, plays an essential role in type IV pili and type II pseudopili formation by proteolytically removing the leader sequence from substrate proteins and subsequently monomethylating the alpha-amino group of the newly exposed N-terminal phenylalanine. The chain is Prepilin leader peptidase/N-methyltransferase (gspO) from Burkholderia pseudomallei (strain 1026b).